The following is a 316-amino-acid chain: Probable cell division protein WhiA (316 aa).

The H-T-H motif DNA-binding region spans Ser276–Lys309.

This sequence belongs to the WhiA family.

Functionally, involved in cell division and chromosome segregation. This chain is Probable cell division protein WhiA, found in Bifidobacterium longum (strain NCC 2705).